The sequence spans 472 residues: Glutamine synthetase (472 aa).

Residues 17–101 form the GS beta-grasp domain; it reads NNVKFVLLRF…IRCSVYEPTT (85 aa). A GS catalytic domain is found at 109-472; that stretch reads PRSIAIRAEN…HPVEFEMYYA (364 aa). The Mg(2+) site is built by glutamate 134 and glutamate 136. ATP is bound at residue glutamate 212. Mg(2+)-binding residues include glutamate 217 and glutamate 225. L-glutamate is bound by residues 269–270 and glycine 270; that span reads NG. Histidine 274 is a binding site for Mg(2+). ATP is bound by residues 276–278 and serine 278; that span reads NMS. Arginine 326, glutamate 332, and arginine 344 together coordinate L-glutamate. Residues arginine 344, arginine 349, and lysine 357 each coordinate ATP. Glutamate 362 contributes to the Mg(2+) binding site. Position 364 (arginine 364) interacts with L-glutamate. An O-AMP-tyrosine modification is found at tyrosine 402.

It belongs to the glutamine synthetase family. As to quaternary structure, oligomer of 12 subunits arranged in the form of two hexameric ring. Mg(2+) serves as cofactor.

It localises to the cytoplasm. The enzyme catalyses L-glutamate + NH4(+) + ATP = L-glutamine + ADP + phosphate + H(+). The activity of this enzyme could be controlled by adenylation under conditions of abundant glutamine. Functionally, catalyzes the ATP-dependent biosynthesis of glutamine from glutamate and ammonia. This chain is Glutamine synthetase, found in Haemophilus influenzae (strain ATCC 51907 / DSM 11121 / KW20 / Rd).